Reading from the N-terminus, the 431-residue chain is Enolase (431 aa).

Position 167 (Gln-167) interacts with (2R)-2-phosphoglycerate. Catalysis depends on Glu-209, which acts as the Proton donor. The Mg(2+) site is built by Asp-246, Glu-290, and Asp-316. (2R)-2-phosphoglycerate contacts are provided by Lys-341, Arg-370, Ser-371, and Lys-392. Catalysis depends on Lys-341, which acts as the Proton acceptor.

It belongs to the enolase family. As to quaternary structure, component of the RNA degradosome, a multiprotein complex involved in RNA processing and mRNA degradation. It depends on Mg(2+) as a cofactor.

It localises to the cytoplasm. It is found in the secreted. The protein resides in the cell surface. It carries out the reaction (2R)-2-phosphoglycerate = phosphoenolpyruvate + H2O. Its pathway is carbohydrate degradation; glycolysis; pyruvate from D-glyceraldehyde 3-phosphate: step 4/5. Functionally, catalyzes the reversible conversion of 2-phosphoglycerate (2-PG) into phosphoenolpyruvate (PEP). It is essential for the degradation of carbohydrates via glycolysis. This is Enolase from Shigella flexneri serotype 5b (strain 8401).